The following is a 220-amino-acid chain: UPF0319 protein YccT (220 aa).

The N-terminal stretch at 1 to 20 (MKTGALTTFLALCLPVTVFA) is a signal peptide.

It belongs to the UPF0319 family.

This is UPF0319 protein YccT from Salmonella schwarzengrund (strain CVM19633).